Here is a 123-residue protein sequence, read N- to C-terminus: MSAQNSTDPMGATNPENGGATATDLKGKGRAPAAQEPVEDTSMAEDDDDDDDEEDPEEEPEAADDDNMEEIDLDNVIGRRTRGKVIDFANAAQENPADDDDEEDDDDFVEDDNKMDDSKMDED.

Positions 1–123 (MSAQNSTDPM…KMDDSKMDED (123 aa)) are disordered. Acidic residues-rich tracts occupy residues 37–73 (PVED…EIDL) and 96–110 (PADD…DFVE). Residues 111 to 123 (DDNKMDDSKMDED) show a composition bias toward basic and acidic residues.

The protein belongs to the CHZ1 family. In terms of assembly, forms a heterotrimer with H2A.Z-H2B, stabilizing the association of the histone dimer. Also, with a lower affinity, forms a heterotrimer with H2A-H2B.

Its subcellular location is the nucleus. In terms of biological role, forms a chaperone-bound H2A.Z-H2B complex that acts as a source for SWR1 complex-dependent H2A to H2A.Z histone replacement in chromatin. In Chaetomium globosum (strain ATCC 6205 / CBS 148.51 / DSM 1962 / NBRC 6347 / NRRL 1970) (Soil fungus), this protein is Histone H2A.Z-specific chaperone CHZ1 (CHZ1).